The following is a 470-amino-acid chain: MMRENPELLLGQVLGDSLRFVSIIGAGAYGVVYKAEDIYDGTLYAVKALCKDGLNEKQKKLQARELALHARVSSHPYIITLHRVLETEDAIYVVLQYCPNGDLFTYITEKKVYQGNSHLIKTVFLQLISAVEHCHSVGIYHRDLKPENIMVGNDVNTVYLADFGLATTEPYSSDFGCGSLFYMSPECQREVKKLSSLSDMLPVTPEPIESQSSSFATAPNDVWALGIILINLCCKRNPWKRACSQTDGTYRSYVHNPSTLLSILPISRELNSLLNRIFDRNPKTRITLPELSTLVSNCKNLTRRLRPAPLVSSRYLAYQQQQQQQQMNLQQGIQGYPHQGYMPTQNIGFPWPPTPQFVSNWNHCATPTIPVSLQVLTPNSSLKVDPTTPLTAPIHATESFWPSAAAAAAAVHNNANSYMPITPTPYPNNAKIFGYPNQPPLTPIPFTGFVLHPAPVGRAADAVDPSRKSL.

The Protein kinase domain maps to 18–295 (LRFVSIIGAG…ITLPELSTLV (278 aa)). Residues 24 to 32 (IGAGAYGVV) and Lys47 each bind ATP. The active-site Proton acceptor is the Asp143. Residue Ser469 is modified to Phosphoserine.

This sequence belongs to the protein kinase superfamily. Ser/Thr protein kinase family.

It carries out the reaction L-seryl-[protein] + ATP = O-phospho-L-seryl-[protein] + ADP + H(+). The catalysed reaction is L-threonyl-[protein] + ATP = O-phospho-L-threonyl-[protein] + ADP + H(+). In terms of biological role, this protein is a negative regulator of both sexual conjugation and meiosis. It phosphorylates mei2. It blocks the onset of meiosis until conjugation takes place. The protein is Negative regulator of sexual conjugation and meiosis (ran1) of Schizosaccharomyces pombe (strain 972 / ATCC 24843) (Fission yeast).